We begin with the raw amino-acid sequence, 214 residues long: Alpha-S1-casein (214 aa).

An N-terminal signal peptide occupies residues 1 to 15 (MKLLILTCLVAVALA). The tract at residues 59 to 91 (IGSESTEDQAMEDAKQMKAGSSSSSEEIVPNSA) is disordered. Phosphoserine occurs at positions 61, 63, 79, 80, 81, 82, 83, 90, and 130.

Belongs to the alpha-casein family. Mammary gland specific. Secreted in milk.

It is found in the secreted. Functionally, important role in the capacity of milk to transport calcium phosphate. The polypeptide is Alpha-S1-casein (CSN1S1) (Capra hircus (Goat)).